The primary structure comprises 754 residues: Putative sulfate transporter YPR003C (754 aa).

Positions 1 to 91 are disordered; the sequence is MTSNNSLLGR…NTSNTNNNDS (91 aa). Over 1-118 the chain is Cytoplasmic; that stretch reads MTSNNSLLGR…SWLPEYTFNK (118 aa). Basic and acidic residues predominate over residues 25–45; the sequence is RSVDQRDTFSDNFDYDKDSSN. Positions 65 to 89 are enriched in low complexity; sequence NSRSGCTNNTNNTNNTSNTSNTNNN. The helical transmembrane segment at 119 to 139 threads the bilayer; it reads LWGDVIAGISVASFQIPLALS. The Lumenal portion of the chain corresponds to 140–146; sequence YTTSIAH. The helical transmembrane segment at 147–167 threads the bilayer; the sequence is VPPLCGLYSLAISPFVYGILG. At 168–172 the chain is on the cytoplasmic side; sequence SVPQM. The helical transmembrane segment at 173 to 193 threads the bilayer; the sequence is IVGPESAISLVVGQAVESITL. The Lumenal segment spans residues 194–199; it reads HKENVS. Residues 200–220 traverse the membrane as a helical segment; sequence LIDISTVITFVSGTILLFSGI. Topologically, residues 221–232 are cytoplasmic; it reads SRFGFLGNVLSK. Residues 233–253 traverse the membrane as a helical segment; it reads ALLRGFISSVGLVMIINSLIS. At 254–282 the chain is on the lumenal side; the sequence is ELKLDKFLVSLPQHYHTPFEKILFLIDYA. A helical transmembrane segment spans residues 283-303; it reads PAQYHIPTAIFSGCCLIVLFL. The Cytoplasmic portion of the chain corresponds to 304 to 317; that stretch reads TRLLKRKLMKYHKS. Residues 318–338 form a helical membrane-spanning segment; that stretch reads AIFFPDILLVVIVTILISMKF. The Lumenal segment spans residues 339–370; sequence NLKHRYGISIIGDFSMDNFDELKNPLTRPRRK. The chain crosses the membrane as a helical span at residues 371-391; the sequence is LIPDLFSASLIVAMLGFFEST. Topologically, residues 392–410 are cytoplasmic; it reads TASKSLGTTYNLTVSSNRE. The helical transmembrane segment at 411–431 threads the bilayer; that stretch reads LVALGFMNIVISLFGALPAFG. The Lumenal segment spans residues 432 to 450; that stretch reads GYGRSKINALSGAQSVMSG. Residues 451 to 471 traverse the membrane as a helical segment; that stretch reads VFMGVITLITMNLLLQFVHYI. The Cytoplasmic segment spans residues 472-474; it reads PNC. A helical membrane pass occupies residues 475-495; sequence VLSVITTIIGISLLEEVPGDI. At 496-517 the chain is on the lumenal side; it reads KFHLRCGGFSELFVFAVTFCTT. A helical transmembrane segment spans residues 518–538; that stretch reads IFYSIEAGICIGCVYSIINII. Residues 539–754 lie on the Cytoplasmic side of the membrane; sequence KHSAKSRIQI…SNTLFNSSLV (216 aa). Residues 574 to 725 form the STAS domain; the sequence is DVEGTEEIEG…DSIDAALYEI (152 aa).

The protein belongs to the SLC26A/SulP transporter (TC 2.A.53) family.

The protein resides in the endoplasmic reticulum membrane. In terms of biological role, possible sulfate transporter. This is Putative sulfate transporter YPR003C from Saccharomyces cerevisiae (strain ATCC 204508 / S288c) (Baker's yeast).